A 160-amino-acid chain; its full sequence is Cytochrome b6-f complex subunit 4 (160 aa).

3 helical membrane-spanning segments follow: residues 36-56 (LLYI…GLAV), 95-115 (LLGV…PFLE), and 131-151 (TVFL…AMPI).

It belongs to the cytochrome b family. PetD subfamily. The 4 large subunits of the cytochrome b6-f complex are cytochrome b6, subunit IV (17 kDa polypeptide, petD), cytochrome f and the Rieske protein, while the 4 small subunits are petG, petL, petM and petN. The complex functions as a dimer.

Its subcellular location is the plastid. The protein resides in the chloroplast thylakoid membrane. Functionally, component of the cytochrome b6-f complex, which mediates electron transfer between photosystem II (PSII) and photosystem I (PSI), cyclic electron flow around PSI, and state transitions. The chain is Cytochrome b6-f complex subunit 4 from Zygnema circumcarinatum (Green alga).